We begin with the raw amino-acid sequence, 559 residues long: Dihydroxy-acid dehydratase (559 aa).

A Mg(2+)-binding site is contributed by Asp78. Cys119 contributes to the [2Fe-2S] cluster binding site. Mg(2+) is bound by residues Asp120 and Lys121. Residue Lys121 is modified to N6-carboxylysine. Cys192 contributes to the [2Fe-2S] cluster binding site. Glu446 serves as a coordination point for Mg(2+). Catalysis depends on Ser472, which acts as the Proton acceptor.

This sequence belongs to the IlvD/Edd family. Homodimer. The cofactor is [2Fe-2S] cluster. It depends on Mg(2+) as a cofactor.

It catalyses the reaction (2R)-2,3-dihydroxy-3-methylbutanoate = 3-methyl-2-oxobutanoate + H2O. It carries out the reaction (2R,3R)-2,3-dihydroxy-3-methylpentanoate = (S)-3-methyl-2-oxopentanoate + H2O. It functions in the pathway amino-acid biosynthesis; L-isoleucine biosynthesis; L-isoleucine from 2-oxobutanoate: step 3/4. Its pathway is amino-acid biosynthesis; L-valine biosynthesis; L-valine from pyruvate: step 3/4. Its function is as follows. Functions in the biosynthesis of branched-chain amino acids. Catalyzes the dehydration of (2R,3R)-2,3-dihydroxy-3-methylpentanoate (2,3-dihydroxy-3-methylvalerate) into 2-oxo-3-methylpentanoate (2-oxo-3-methylvalerate) and of (2R)-2,3-dihydroxy-3-methylbutanoate (2,3-dihydroxyisovalerate) into 2-oxo-3-methylbutanoate (2-oxoisovalerate), the penultimate precursor to L-isoleucine and L-valine, respectively. In Wolinella succinogenes (strain ATCC 29543 / DSM 1740 / CCUG 13145 / JCM 31913 / LMG 7466 / NCTC 11488 / FDC 602W) (Vibrio succinogenes), this protein is Dihydroxy-acid dehydratase.